The primary structure comprises 164 residues: Putative glutamine amidotransferase-like protein RP713 (164 aa).

The region spanning 39-164 is the Glutamine amidotransferase type-1 domain; sequence TIANPNSLFM…VITVKIIIYM (126 aa).

In Rickettsia prowazekii (strain Madrid E), this protein is Putative glutamine amidotransferase-like protein RP713.